The following is a 228-amino-acid chain: Sodium channel regulatory subunit beta-4 (228 aa).

The N-terminal stretch at 1 to 30 (MSRAGNRGNTQARWLGIGLLGLFLLPMYLS) is a signal peptide. The Ig-like C2-type domain occupies 31–148 (LEVSVGKATT…KDLNNSATIF (118 aa)). The Extracellular segment spans residues 31-161 (LEVSVGKATT…VDKLEEVDNT (131 aa)). 4 N-linked (GlcNAc...) asparagine glycosylation sites follow: Asn-45, Asn-71, Asn-113, and Asn-142. Cysteines 53 and 131 form a disulfide. The helical transmembrane segment at 162–182 (VTLIILAVVGGVIGLLVCILL) threads the bilayer. Residues 183–228 (LKKLITFILKKTREKKKECLVSSSGNDNTENGLPGSKAEEKPPTKV) lie on the Cytoplasmic side of the membrane. The disordered stretch occupies residues 199–228 (KECLVSSSGNDNTENGLPGSKAEEKPPTKV). The span at 203–213 (VSSSGNDNTEN) shows a compositional bias: polar residues. Over residues 219–228 (KAEEKPPTKV) the composition is skewed to basic and acidic residues.

Belongs to the sodium channel auxiliary subunit SCN4B (TC 8.A.17) family. A voltage-gated sodium (Nav) channel consists of an ion-conducting pore-forming alpha subunit functional on its own that is regulated by one or more beta subunits. The beta subunit SCN4B is disulfide-linked to the pore-forming alpha subunit. Interacts with SCN1A; regulatory subunit of SCN1A/Nav1.1. Interacts with SCN2A; regulatory subunit of SCN2A/Nav1.2. Contains an interchain disulfide bond with SCN2A. In terms of tissue distribution, expressed at a high level in dorsal root ganglia, at a lower level in brain, spinal cord, skeletal muscle and heart.

The protein localises to the cell membrane. Functionally, regulatory subunit of multiple voltage-gated sodium (Nav) channels directly mediating the depolarization of excitable membranes. Navs, also called VGSCs (voltage-gated sodium channels) or VDSCs (voltage-dependent sodium channels), operate by switching between closed and open conformations depending on the voltage difference across the membrane. In the open conformation they allow Na(+) ions to selectively pass through the pore, along their electrochemical gradient. The influx of Na+ ions provokes membrane depolarization, initiating the propagation of electrical signals throughout cells and tissues. The accessory beta subunits participate in localization and functional modulation of the Nav channels. Modulates the activity of SCN1A/Nav1.1. Modulates the activity of SCN2A/Nav1.2. In Rattus norvegicus (Rat), this protein is Sodium channel regulatory subunit beta-4.